A 287-amino-acid polypeptide reads, in one-letter code: Oxaloacetate decarboxylase (287 aa).

Serine 50 lines the substrate pocket. Residue aspartate 88 participates in Mg(2+) binding. Residues arginine 159 and histidine 235 each contribute to the substrate site.

Belongs to the isocitrate lyase/PEP mutase superfamily. Oxaloacetate decarboxylase family. As to quaternary structure, homotetramer; dimer of dimers. Requires Mg(2+) as cofactor.

The enzyme catalyses oxaloacetate + H(+) = pyruvate + CO2. Functionally, catalyzes the decarboxylation of oxaloacetate into pyruvate. Seems to play a role in maintaining cellular concentrations of bicarbonate and pyruvate. The sequence is that of Oxaloacetate decarboxylase from Pseudomonas paraeruginosa (strain DSM 24068 / PA7) (Pseudomonas aeruginosa (strain PA7)).